Consider the following 111-residue polypeptide: Cytochrome c oxidase subunit 6A1, mitochondrial (111 aa).

The N-terminal 26 residues, 1 to 26 (MASAVLSASRVSRPLGRALPGLRRPM), are a transit peptide targeting the mitochondrion. The Mitochondrial matrix portion of the chain corresponds to 27 to 36 (SSGAHGEEGS). The chain crosses the membrane as a helical span at residues 37-61 (ARMWKALTYFVALPGVGVSMLNVFL). Residues 62 to 111 (KSRHEEHERPPFVAYPHLRIRTKPFPWGDGNHTLFHNPHVNPLPTGYEDE) are Mitochondrial intermembrane-facing.

This sequence belongs to the cytochrome c oxidase subunit 6A family. Component of the cytochrome c oxidase (complex IV, CIV), a multisubunit enzyme composed of 14 subunits. The complex is composed of a catalytic core of 3 subunits MT-CO1, MT-CO2 and MT-CO3, encoded in the mitochondrial DNA, and 11 supernumerary subunits COX4I, COX5A, COX5B, COX6A, COX6B, COX6C, COX7A, COX7B, COX7C, COX8 and NDUFA4, which are encoded in the nuclear genome. The complex exists as a monomer or a dimer and forms supercomplexes (SCs) in the inner mitochondrial membrane with NADH-ubiquinone oxidoreductase (complex I, CI) and ubiquinol-cytochrome c oxidoreductase (cytochrome b-c1 complex, complex III, CIII), resulting in different assemblies (supercomplex SCI(1)III(2)IV(1) and megacomplex MCI(2)III(2)IV(2)).

The protein localises to the mitochondrion inner membrane. The protein operates within energy metabolism; oxidative phosphorylation. Component of the cytochrome c oxidase, the last enzyme in the mitochondrial electron transport chain which drives oxidative phosphorylation. The respiratory chain contains 3 multisubunit complexes succinate dehydrogenase (complex II, CII), ubiquinol-cytochrome c oxidoreductase (cytochrome b-c1 complex, complex III, CIII) and cytochrome c oxidase (complex IV, CIV), that cooperate to transfer electrons derived from NADH and succinate to molecular oxygen, creating an electrochemical gradient over the inner membrane that drives transmembrane transport and the ATP synthase. Cytochrome c oxidase is the component of the respiratory chain that catalyzes the reduction of oxygen to water. Electrons originating from reduced cytochrome c in the intermembrane space (IMS) are transferred via the dinuclear copper A center (CU(A)) of subunit 2 and heme A of subunit 1 to the active site in subunit 1, a binuclear center (BNC) formed by heme A3 and copper B (CU(B)). The BNC reduces molecular oxygen to 2 water molecules unsing 4 electrons from cytochrome c in the IMS and 4 protons from the mitochondrial matrix. The polypeptide is Cytochrome c oxidase subunit 6A1, mitochondrial (Cox6a1) (Mus musculus (Mouse)).